The following is a 313-amino-acid chain: BTB/POZ domain-containing adapter for CUL3-mediated RhoA degradation protein 3 (313 aa).

The residue at position 1 (M1) is an N-acetylmethionine. The residue at position 23 (S23) is a Phosphoserine. Residues 32–100 (KYVKLNVGGA…LRDGAVPLPE (69 aa)) form the BTB domain. The PCNA-binding signature appears at 239-245 (QTKVEFP).

Belongs to the BACURD family. In terms of assembly, homotetramer; forms a two-fold symmetric tetramer in solution. Interacts with CUL3; interaction is direct and forms a 5:5 heterodecamer. Component of the BCR(BACURD3) E3 ubiquitin ligase complex, at least composed of CUL3, KCTD10/BACURD3 and RBX1. Interacts with DNA polymerase delta subunit 2/POLD2. Interacts with PCNA.

The protein localises to the nucleus. The protein operates within protein modification; protein ubiquitination. Functionally, substrate-specific adapter of a BCR (BTB-CUL3-RBX1) E3 ubiquitin-protein ligase complex. The BCR(BACURD3) E3 ubiquitin ligase complex mediates the ubiquitination of target proteins, leading to their degradation by the proteasome. This Homo sapiens (Human) protein is BTB/POZ domain-containing adapter for CUL3-mediated RhoA degradation protein 3 (KCTD10).